The chain runs to 445 residues: UDP-N-acetylmuramoylalanine--D-glutamate ligase (445 aa).

126–132 (GTSGKTT) contacts ATP.

This sequence belongs to the MurCDEF family.

Its subcellular location is the cytoplasm. The enzyme catalyses UDP-N-acetyl-alpha-D-muramoyl-L-alanine + D-glutamate + ATP = UDP-N-acetyl-alpha-D-muramoyl-L-alanyl-D-glutamate + ADP + phosphate + H(+). Its pathway is cell wall biogenesis; peptidoglycan biosynthesis. Cell wall formation. Catalyzes the addition of glutamate to the nucleotide precursor UDP-N-acetylmuramoyl-L-alanine (UMA). The chain is UDP-N-acetylmuramoylalanine--D-glutamate ligase from Nitratidesulfovibrio vulgaris (strain DSM 19637 / Miyazaki F) (Desulfovibrio vulgaris).